A 448-amino-acid polypeptide reads, in one-letter code: F-box/FBD/LRR-repeat protein At2g04230 (448 aa).

Residues 12–64 enclose the F-box domain; the sequence is EDRISDLPDALLLQILSSLPTENAIATSVLSKRWRSLWTMLPKLKFDSNFNPV. 7 LRR repeats span residues 72–98, 149–176, 177–202, 204–225, 226–251, 271–296, and 319–345; these read PTMF…HLSF, ILKL…YLDQ, VHFK…VVHR, SNAD…TIED, LRQE…NING, ISNV…ILHL, and THER…KLTD. The 52-residue stretch at 359–410 folds into the FBD domain; that stretch reads KWNPPKCAPECLLFHLETFLWIGYEWQRGDEKEVATYILENARRLKKATFST.

This is F-box/FBD/LRR-repeat protein At2g04230 from Arabidopsis thaliana (Mouse-ear cress).